Consider the following 1318-residue polypeptide: Serine/threonine-protein kinase ppk18 (1318 aa).

The tract at residues 431–485 is disordered; sequence PSVSPEEVHDISQFNHRNDPPITAASVDSSNSFSVHRSSTNHSSTNSGSPNLSRR. Residues 462 to 479 show a composition bias toward low complexity; the sequence is SFSVHRSSTNHSSTNSGS. One can recognise a Protein kinase domain in the interval 566-934; it reads YEIIKPISKG…INEIKEHPFF (369 aa). Residues 572 to 580 and lysine 595 each bind ATP; that span reads ISKGTFGTV. Aspartate 690 functions as the Proton acceptor in the catalytic mechanism. The AGC-kinase C-terminal domain occupies 935 to 1044; it reads NGINWDDIFS…KNLSVLERAN (110 aa). Disordered stretches follow at residues 968 to 1022, 1058 to 1078, and 1091 to 1127; these read GAAE…FSEA, KLHISPPDPHIGYTPGSDMPS, and SLMTNQGSNFSSTDSTPRKSINSSDVESRSKTDGPKS. Residues 972-1000 show a composition bias toward polar residues; that stretch reads SNMSSSVNSGEEVSKDNNVSQERGSQFLR. A compositionally biased stretch (polar residues) spans 1091-1115; the sequence is SLMTNQGSNFSSTDSTPRKSINSSD. The span at 1116–1127 shows a compositional bias: basic and acidic residues; sequence VESRSKTDGPKS. The region spanning 1200-1316 is the Response regulatory domain; it reads KALICVSKLN…LLRGYIARLC (117 aa).

Belongs to the protein kinase superfamily. Ser/Thr protein kinase family.

It is found in the cytoplasm. It catalyses the reaction L-seryl-[protein] + ATP = O-phospho-L-seryl-[protein] + ADP + H(+). The catalysed reaction is L-threonyl-[protein] + ATP = O-phospho-L-threonyl-[protein] + ADP + H(+). This Schizosaccharomyces pombe (strain 972 / ATCC 24843) (Fission yeast) protein is Serine/threonine-protein kinase ppk18 (ppk18).